The primary structure comprises 490 residues: Adenylosuccinate synthetase 1, chloroplastic (490 aa).

The transit peptide at 1-47 directs the protein to the chloroplast; sequence MSLSTLSHPAAAAAAATGSGKSHFRTAPAAQSVRFPKARPPVPAAVS. Residues 14–36 are disordered; sequence AAATGSGKSHFRTAPAAQSVRFP. Residues 77–83 and 105–107 each bind GTP; these read GDEGKGK and GHT. The active-site Proton acceptor is aspartate 78. Residues aspartate 78 and glycine 105 each coordinate Mg(2+). IMP-binding positions include 78–81, 103–106, threonine 195, arginine 209, glutamine 289, threonine 304, and arginine 368; these read DEGK and NAGH. Histidine 106 (proton donor) is an active-site residue. 364-370 provides a ligand contact to substrate; that stretch reads TTTGRPR. Residues arginine 370, 396-398, and 479-481 each bind GTP; these read KLD and GVG.

This sequence belongs to the adenylosuccinate synthetase family. In terms of assembly, homodimer. Requires Mg(2+) as cofactor.

The protein localises to the plastid. Its subcellular location is the chloroplast. The enzyme catalyses IMP + L-aspartate + GTP = N(6)-(1,2-dicarboxyethyl)-AMP + GDP + phosphate + 2 H(+). Its pathway is purine metabolism; AMP biosynthesis via de novo pathway; AMP from IMP: step 1/2. Plays an important role in the de novo pathway and in the salvage pathway of purine nucleotide biosynthesis. Catalyzes the first committed step in the biosynthesis of AMP from IMP. The protein is Adenylosuccinate synthetase 1, chloroplastic of Sorghum bicolor (Sorghum).